The chain runs to 206 residues: MDIILLERIPRLGQMGDIVSVKDGYARNFLLPQGKALRANEANKKHFEIQRAQLEARNLERKSEAEKIAEKLDGKSFIVVRSAGETGQLYGSVSTRDISEIITSEGFSIGRNQVELNHPIKTIGLHTIMLSLHPEVQISVIINVARSASEAQRQAEGETLTSAEAIYDVRKELLAENQEETFAENQQKALAKEMNDNDANSINEEA.

The disordered stretch occupies residues 182 to 206 (FAENQQKALAKEMNDNDANSINEEA). Positions 197–206 (NDANSINEEA) are enriched in polar residues.

The protein belongs to the bacterial ribosomal protein bL9 family.

Binds to the 23S rRNA. The protein is Large ribosomal subunit protein bL9 of Bartonella henselae (strain ATCC 49882 / DSM 28221 / CCUG 30454 / Houston 1) (Rochalimaea henselae).